The following is a 964-amino-acid chain: SKI family transcriptional corepressor 1 (964 aa).

Disordered regions lie at residues T45–L72, R278–A365, A414–Q461, A525–S587, R610–K768, and L794–L842. Residues Q283–C310 are compositionally biased toward gly residues. The segment covering A345–P355 has biased composition (low complexity). Composition is skewed to gly residues over residues A356–A365 and P417–A440. Pro residues predominate over residues S571–A583. Residues D652 to V661 show a composition bias toward acidic residues. Residues E798–H808 are compositionally biased toward basic and acidic residues. The span at D823–N834 shows a compositional bias: polar residues. Residues E853 to E921 adopt a coiled-coil conformation.

It belongs to the SKI family. As to quaternary structure, interacts with SMAD1, SMAD2 and SMAD3. Interacts with LBX1. As to expression, expressed in brain with higher levels in embryo than adult. Expressed by migratory precursors of Purkinje cells in the postnatal brain. Also expressed in adult testis.

The protein localises to the nucleus. Inhibits BMP signaling. Acts as a transcriptional corepressor of LBX1. This is SKI family transcriptional corepressor 1 (Skor1) from Mus musculus (Mouse).